Reading from the N-terminus, the 287-residue chain is Glutamate racemase (287 aa).

Substrate is bound by residues 32-33 and 64-65; these read DS and YG. The Proton donor/acceptor role is filled by C96. A substrate-binding site is contributed by 97-98; it reads NT. C208 serves as the catalytic Proton donor/acceptor. 209–210 lines the substrate pocket; it reads TH.

It belongs to the aspartate/glutamate racemases family.

The catalysed reaction is L-glutamate = D-glutamate. It functions in the pathway cell wall biogenesis; peptidoglycan biosynthesis. Provides the (R)-glutamate required for cell wall biosynthesis. The polypeptide is Glutamate racemase (Photorhabdus laumondii subsp. laumondii (strain DSM 15139 / CIP 105565 / TT01) (Photorhabdus luminescens subsp. laumondii)).